A 304-amino-acid polypeptide reads, in one-letter code: Fructose permease IIC component (304 aa).

The 304-residue stretch at Ile-1–Lys-304 folds into the PTS EIIC type-2 domain. Transmembrane regions (helical) follow at residues Phe-20–Met-40, Asn-62–Leu-82, Pro-98–Ile-118, Asn-140–Leu-160, Ala-181–Phe-201, Ile-214–Ala-234, Val-238–Val-258, and Leu-277–Ile-297.

The protein resides in the cell membrane. Functionally, the phosphoenolpyruvate-dependent sugar phosphotransferase system (PTS), a major carbohydrate active -transport system, catalyzes the phosphorylation of incoming sugar substrates concomitant with their translocation across the cell membrane. This system is involved in fructose transport. The chain is Fructose permease IIC component (fruA) from Bacillus amyloliquefaciens (Bacillus velezensis).